The following is a 436-amino-acid chain: Glutamyl-tRNA reductase (436 aa).

Substrate-binding positions include 56–59, Ser-114, 119–121, and Gln-125; these read TCNR and EAQ. Cys-57 (nucleophile) is an active-site residue. 194–199 contacts NADP(+); that stretch reads GAGEMI.

Belongs to the glutamyl-tRNA reductase family. Homodimer.

It carries out the reaction (S)-4-amino-5-oxopentanoate + tRNA(Glu) + NADP(+) = L-glutamyl-tRNA(Glu) + NADPH + H(+). Its pathway is porphyrin-containing compound metabolism; protoporphyrin-IX biosynthesis; 5-aminolevulinate from L-glutamyl-tRNA(Glu): step 1/2. In terms of biological role, catalyzes the NADPH-dependent reduction of glutamyl-tRNA(Glu) to glutamate 1-semialdehyde (GSA). This Acidovorax sp. (strain JS42) protein is Glutamyl-tRNA reductase.